The chain runs to 199 residues: 7-methyl-GTP pyrophosphatase (199 aa).

D74 functions as the Proton acceptor in the catalytic mechanism.

The protein belongs to the Maf family. YceF subfamily. A divalent metal cation is required as a cofactor.

It localises to the cytoplasm. The catalysed reaction is N(7)-methyl-GTP + H2O = N(7)-methyl-GMP + diphosphate + H(+). Functionally, nucleoside triphosphate pyrophosphatase that hydrolyzes 7-methyl-GTP (m(7)GTP). May have a dual role in cell division arrest and in preventing the incorporation of modified nucleotides into cellular nucleic acids. The polypeptide is 7-methyl-GTP pyrophosphatase (Cupriavidus metallidurans (strain ATCC 43123 / DSM 2839 / NBRC 102507 / CH34) (Ralstonia metallidurans)).